Here is a 93-residue protein sequence, read N- to C-terminus: Pyrimidine/purine nucleoside phosphorylase (93 aa).

This sequence belongs to the nucleoside phosphorylase PpnP family.

The catalysed reaction is a purine D-ribonucleoside + phosphate = a purine nucleobase + alpha-D-ribose 1-phosphate. It catalyses the reaction adenosine + phosphate = alpha-D-ribose 1-phosphate + adenine. It carries out the reaction cytidine + phosphate = cytosine + alpha-D-ribose 1-phosphate. The enzyme catalyses guanosine + phosphate = alpha-D-ribose 1-phosphate + guanine. The catalysed reaction is inosine + phosphate = alpha-D-ribose 1-phosphate + hypoxanthine. It catalyses the reaction thymidine + phosphate = 2-deoxy-alpha-D-ribose 1-phosphate + thymine. It carries out the reaction uridine + phosphate = alpha-D-ribose 1-phosphate + uracil. The enzyme catalyses xanthosine + phosphate = alpha-D-ribose 1-phosphate + xanthine. Its function is as follows. Catalyzes the phosphorolysis of diverse nucleosides, yielding D-ribose 1-phosphate and the respective free bases. Can use uridine, adenosine, guanosine, cytidine, thymidine, inosine and xanthosine as substrates. Also catalyzes the reverse reactions. This Marinobacter nauticus (strain ATCC 700491 / DSM 11845 / VT8) (Marinobacter aquaeolei) protein is Pyrimidine/purine nucleoside phosphorylase.